A 199-amino-acid polypeptide reads, in one-letter code: 7-methyl-GTP pyrophosphatase (199 aa).

Residue Asp-76 is the Proton acceptor of the active site.

This sequence belongs to the Maf family. YceF subfamily. It depends on a divalent metal cation as a cofactor.

It is found in the cytoplasm. The enzyme catalyses N(7)-methyl-GTP + H2O = N(7)-methyl-GMP + diphosphate + H(+). Functionally, nucleoside triphosphate pyrophosphatase that hydrolyzes 7-methyl-GTP (m(7)GTP). May have a dual role in cell division arrest and in preventing the incorporation of modified nucleotides into cellular nucleic acids. This is 7-methyl-GTP pyrophosphatase from Brucella abortus biovar 1 (strain 9-941).